The chain runs to 293 residues: MAATSEHTILQFVSPSSTASATTSVLTARIHPLVIFNVCDCFVRRPDSAERVIGTLLGSILPDGTVDIRNSYAVPHNESSDQVAVDIDYHHNMLASHLKVNSKETIVGWYSTGAGVNGGSSLIHDFYAREVPNPIHLTVDTGFTNGEGTIKAFVSSNLSLGDRQLVAHFQEIPVDLRMVDAERVGFDVLKATSVDKLPNDLEGMELTMERLLTLINDVYKYVDSVVGGQIAPDNNIGRFIADAVASLPKLPPQVFDNLVNDSLQDQLLLLYLSSITRTQLSLAEKLNTAAQML.

Position 2 is an N-acetylalanine (Ala2). The MPN domain maps to Ala28 to Ser159.

Belongs to the eIF-3 subunit F family. In terms of assembly, component of the eukaryotic translation initiation factor 3 (eIF-3) complex. Binds to TIF3E1 and TIF3H1. As to expression, expressed in inflorescences, leaves, stems, siliques, roots and seedlings. Accumulates at highly levels in pollen grains, developing embryos and root tips.

The protein localises to the cytoplasm. Component of the eukaryotic translation initiation factor 3 (eIF-3) complex, which is involved in protein synthesis of a specialized repertoire of mRNAs and, together with other initiation factors, stimulates binding of mRNA and methionyl-tRNAi to the 40S ribosome. The eIF-3 complex specifically targets and initiates translation of a subset of mRNAs involved in cell proliferation (Potential). Involved in cell growth and differentiation, especially during embryogenesis and male gametophyte germination. Regulates sensitivity to sugars (e.g. sucrose). The protein is Eukaryotic translation initiation factor 3 subunit F (TIF3F1) of Arabidopsis thaliana (Mouse-ear cress).